The primary structure comprises 199 residues: Chaperone protein TorD (199 aa).

It belongs to the TorD/DmsD family. TorD subfamily.

It is found in the cytoplasm. Functionally, involved in the biogenesis of TorA. Acts on TorA before the insertion of the molybdenum cofactor and, as a result, probably favors a conformation of the apoenzyme that is competent for acquiring the cofactor. This Escherichia coli O6:H1 (strain CFT073 / ATCC 700928 / UPEC) protein is Chaperone protein TorD.